Reading from the N-terminus, the 609-residue chain is Glutamine--fructose-6-phosphate aminotransferase [isomerizing] (609 aa).

Catalysis depends on Cys2, which acts as the Nucleophile; for GATase activity. In terms of domain architecture, Glutamine amidotransferase type-2 spans 2 to 218 (CGIVGAIAQR…EGDIAEITRR (217 aa)). 2 consecutive SIS domains span residues 286–426 (ADEL…LKGL) and 458–599 (LAED…VDQP). The active-site For Fru-6P isomerization activity is the Lys604.

As to quaternary structure, homodimer. In pull-down experiments interacts with CedA.

It localises to the cytoplasm. It carries out the reaction D-fructose 6-phosphate + L-glutamine = D-glucosamine 6-phosphate + L-glutamate. Its function is as follows. Catalyzes the first step in hexosamine metabolism, converting fructose-6P into glucosamine-6P using glutamine as a nitrogen source. The sequence is that of Glutamine--fructose-6-phosphate aminotransferase [isomerizing] (glmS) from Escherichia coli (strain K12).